The following is a 524-amino-acid chain: Chromosomal replication initiator protein DnaA (524 aa).

The segment at 1–72 (MNDFWQHCSA…DLARDFWNAP (72 aa)) is domain I, interacts with DnaA modulators. Residues 72–187 (PIEVQFVLDP…GEADSMYERS (116 aa)) are domain II. The segment at 188–404 (KLNPVLTFDN…GALRKILAYS (217 aa)) is domain III, AAA+ region. Residues G232, G234, K235, and T236 each coordinate ATP. Residues 405–524 (KFHGREISIE…LHVLEQTLKG (120 aa)) are domain IV, binds dsDNA.

It belongs to the DnaA family. Oligomerizes as a right-handed, spiral filament on DNA at oriC.

The protein resides in the cytoplasm. In terms of biological role, plays an essential role in the initiation and regulation of chromosomal replication. ATP-DnaA binds to the origin of replication (oriC) to initiate formation of the DNA replication initiation complex once per cell cycle. Binds the DnaA box (a 9 base pair repeat at the origin) and separates the double-stranded (ds)DNA. Forms a right-handed helical filament on oriC DNA; dsDNA binds to the exterior of the filament while single-stranded (ss)DNA is stabiized in the filament's interior. The ATP-DnaA-oriC complex binds and stabilizes one strand of the AT-rich DNA unwinding element (DUE), permitting loading of DNA polymerase. After initiation quickly degrades to an ADP-DnaA complex that is not apt for DNA replication. Binds acidic phospholipids. The chain is Chromosomal replication initiator protein DnaA from Burkholderia multivorans (strain ATCC 17616 / 249).